The chain runs to 228 residues: Lipoprotein-releasing system ATP-binding protein LolD (228 aa).

One can recognise an ABC transporter domain in the interval 7-228 (LNCQNLTKDY…MQDGVLRPEM (222 aa)). 43–50 (GSSGSGKS) lines the ATP pocket.

Belongs to the ABC transporter superfamily. Lipoprotein translocase (TC 3.A.1.125) family. As to quaternary structure, the complex is composed of two ATP-binding proteins (LolD) and two transmembrane proteins (LolC and LolE).

The protein localises to the cell inner membrane. Its function is as follows. Part of the ABC transporter complex LolCDE involved in the translocation of mature outer membrane-directed lipoproteins, from the inner membrane to the periplasmic chaperone, LolA. Responsible for the formation of the LolA-lipoprotein complex in an ATP-dependent manner. The chain is Lipoprotein-releasing system ATP-binding protein LolD from Mannheimia succiniciproducens (strain KCTC 0769BP / MBEL55E).